The following is a 33-amino-acid chain: Gastrin (33 aa).

A disordered region spans residues 1 to 21 (ELEPQGPPHLGTDLSKKQGPW). Position 18 is a pyrrolidone carboxylic acid (glutamine 18). Tyrosine 28 is modified (sulfotyrosine). Phenylalanine 33 is modified (phenylalanine amide).

This sequence belongs to the gastrin/cholecystokinin family.

Its subcellular location is the secreted. Gastrin stimulates the stomach mucosa to produce and secrete hydrochloric acid and the pancreas to secrete its digestive enzymes. It also stimulates smooth muscle contraction and increases blood circulation and water secretion in the stomach and intestine. The protein is Gastrin (GAST) of Chinchilla chinchilla (Short-tailed chinchilla).